We begin with the raw amino-acid sequence, 360 residues long: MTTTLQQRSRASVWDRFCEWITSTENRIYIGWFGVLMIPTLLAATACFVIAFIAAPPVDIDGIREPVAGSLIYGNNIISGAVVPSSNAIGLHFYPIWEAASLDEWLYNGGPYQLVIFHFLLGCACYLGRQWELSYRLGMRPWICVAYSAPLASATAVFLIYPIGQGSFSDGMPLGISGTFNFMIVFQAEHNILLHPFHMLGVAGVFGGSLFSAMHGSLVTSSLVRETTETESQNYGYKFGQEEETYNIVAAHGYFGRLIFQYASFNNSRSLHFFLAAWPVVGIWFTALGVSTMAFNLNGFNFNQSVIDSQGRVIATWADVINRANLGMEVMHERNAHNFPLDLAAGEVAPVALTAPAING.

Helical transmembrane passes span 29–46, 118–133, and 142–156; these read YIGW…AATA, HFLL…QWEL, and WICV…SATA. H118 is a binding site for chlorophyll a. Residue Y126 participates in pheophytin a binding. 2 residues coordinate [CaMn4O5] cluster: D170 and E189. The helical transmembrane segment at 197 to 218 threads the bilayer; that stretch reads FHMLGVAGVFGGSLFSAMHGSL. Position 198 (H198) interacts with chlorophyll a. A quinone-binding positions include H215 and 264–265; that span reads SF. Residue H215 participates in Fe cation binding. A Fe cation-binding site is contributed by H272. A helical membrane pass occupies residues 274–288; the sequence is FLAAWPVVGIWFTAL. Residues H332, E333, D342, and A344 each contribute to the [CaMn4O5] cluster site. A propeptide spanning residues 345 to 360 is cleaved from the precursor; it reads AGEVAPVALTAPAING.

The protein belongs to the reaction center PufL/M/PsbA/D family. In terms of assembly, PSII is composed of 1 copy each of membrane proteins PsbA, PsbB, PsbC, PsbD, PsbE, PsbF, PsbH, PsbI, PsbJ, PsbK, PsbL, PsbM, PsbT, PsbX, PsbY, PsbZ, Psb30/Ycf12, peripheral proteins PsbO, CyanoQ (PsbQ), PsbU, PsbV and a large number of cofactors. It forms dimeric complexes. The D1/D2 heterodimer binds P680, chlorophylls that are the primary electron donor of PSII, and subsequent electron acceptors. It shares a non-heme iron and each subunit binds pheophytin, quinone, additional chlorophylls, carotenoids and lipids. D1 provides most of the ligands for the Mn4-Ca-O5 cluster of the oxygen-evolving complex (OEC). There is also a Cl(-1) ion associated with D1 and D2, which is required for oxygen evolution. The PSII complex binds additional chlorophylls, carotenoids and specific lipids. serves as cofactor. Post-translationally, tyr-161 forms a radical intermediate that is referred to as redox-active TyrZ, YZ or Y-Z. In terms of processing, C-terminally processed by CtpA; processing is essential to allow assembly of the oxygen-evolving complex and thus photosynthetic growth.

The protein resides in the cellular thylakoid membrane. It catalyses the reaction 2 a plastoquinone + 4 hnu + 2 H2O = 2 a plastoquinol + O2. Its function is as follows. Photosystem II (PSII) is a light-driven water:plastoquinone oxidoreductase that uses light energy to abstract electrons from H(2)O, generating O(2) and a proton gradient subsequently used for ATP formation. It consists of a core antenna complex that captures photons, and an electron transfer chain that converts photonic excitation into a charge separation. The D1/D2 (PsbA/PsbD) reaction center heterodimer binds P680, the primary electron donor of PSII as well as several subsequent electron acceptors. The sequence is that of Photosystem II protein D1 from Microchaete diplosiphon (Fremyella diplosiphon).